Here is a 122-residue protein sequence, read N- to C-terminus: Large ribosomal subunit protein uL14 (122 aa).

Belongs to the universal ribosomal protein uL14 family. Part of the 50S ribosomal subunit. Forms a cluster with proteins L3 and L19. In the 70S ribosome, L14 and L19 interact and together make contacts with the 16S rRNA in bridges B5 and B8.

Its function is as follows. Binds to 23S rRNA. Forms part of two intersubunit bridges in the 70S ribosome. The chain is Large ribosomal subunit protein uL14 from Shewanella baltica (strain OS223).